The chain runs to 277 residues: UBX domain-containing protein 8 (277 aa).

Position 1 (Met-1) is a topological domain, cytoplasmic. Residues 2-22 (ASRGVVGLFLLSALPLLCLEL) form a helical membrane-spanning segment. Residues 23 to 33 (RRGIPSLGIKD) lie on the Lumenal side of the membrane. The helical transmembrane segment at 34–54 (LILLSGRIFLLLALLTLVISV) threads the bilayer. Over 55 to 277 (TTSWFNSLKP…NVEEKEQSSQ (223 aa)) the chain is Cytoplasmic. Residues 64–89 (PSQGHLKEGEKENEKRRRLVRERQQE) are disordered. Over residues 68–89 (HLKEGEKENEKRRRLVRERQQE) the composition is skewed to basic and acidic residues. Residues 193–269 (TAEEVVTVAL…GITVDTVLNV (77 aa)) enclose the UBX domain.

As to quaternary structure, interacts with SYVN1 and VCP. As to expression, highly expressed in gonads. In testis, expressed in post-meiotic round spermatids, while in ovaries it is expressed in granulosa cells.

The protein resides in the endoplasmic reticulum membrane. In terms of biological role, involved in endoplasmic reticulum-associated degradation (ERAD) for misfolded lumenal proteins, possibly by tethering VCP to the endoplasmic reticulum membrane. May play a role in reproduction. This Mus musculus (Mouse) protein is UBX domain-containing protein 8 (Ubxn8).